The sequence spans 424 residues: Serine hydroxymethyltransferase (424 aa).

Residues leucine 123 and glycine 127–leucine 129 each bind (6S)-5,6,7,8-tetrahydrofolate. Position 232 is an N6-(pyridoxal phosphate)lysine (lysine 232). Glutamate 245 is a (6S)-5,6,7,8-tetrahydrofolate binding site.

It belongs to the SHMT family. Homodimer. It depends on pyridoxal 5'-phosphate as a cofactor.

It localises to the cytoplasm. The catalysed reaction is (6R)-5,10-methylene-5,6,7,8-tetrahydrofolate + glycine + H2O = (6S)-5,6,7,8-tetrahydrofolate + L-serine. It participates in one-carbon metabolism; tetrahydrofolate interconversion. The protein operates within amino-acid biosynthesis; glycine biosynthesis; glycine from L-serine: step 1/1. Its function is as follows. Catalyzes the reversible interconversion of serine and glycine with tetrahydrofolate (THF) serving as the one-carbon carrier. This reaction serves as the major source of one-carbon groups required for the biosynthesis of purines, thymidylate, methionine, and other important biomolecules. Also exhibits THF-independent aldolase activity toward beta-hydroxyamino acids, producing glycine and aldehydes, via a retro-aldol mechanism. This chain is Serine hydroxymethyltransferase, found in Kocuria rhizophila (strain ATCC 9341 / DSM 348 / NBRC 103217 / DC2201).